Reading from the N-terminus, the 563-residue chain is Arginine--tRNA ligase (563 aa).

The short motif at 120–130 (PNIAKPFHIGH) is the 'HIGH' region element.

This sequence belongs to the class-I aminoacyl-tRNA synthetase family. Monomer.

It localises to the cytoplasm. The enzyme catalyses tRNA(Arg) + L-arginine + ATP = L-arginyl-tRNA(Arg) + AMP + diphosphate. This chain is Arginine--tRNA ligase, found in Clostridium botulinum (strain Okra / Type B1).